Consider the following 408-residue polypeptide: Na(+)-translocating NADH-quinone reductase subunit F (408 aa).

Residues 6-26 (IILGVVMFTAIVLALVAIILA) traverse the membrane as a helical segment. Residues 35–127 (GDVTIRINGE…DMDVEVPEEV (93 aa)) form the 2Fe-2S ferredoxin-type domain. [2Fe-2S] cluster is bound by residues Cys70, Cys76, Cys79, and Cys111. The 141-residue stretch at 130 to 270 (VKAWECTVES…YGPFGEFFAK (141 aa)) folds into the FAD-binding FR-type domain.

Belongs to the NqrF family. As to quaternary structure, composed of six subunits; NqrA, NqrB, NqrC, NqrD, NqrE and NqrF. [2Fe-2S] cluster serves as cofactor. FAD is required as a cofactor.

It is found in the cell inner membrane. The enzyme catalyses a ubiquinone + n Na(+)(in) + NADH + H(+) = a ubiquinol + n Na(+)(out) + NAD(+). Its function is as follows. NQR complex catalyzes the reduction of ubiquinone-1 to ubiquinol by two successive reactions, coupled with the transport of Na(+) ions from the cytoplasm to the periplasm. The first step is catalyzed by NqrF, which accepts electrons from NADH and reduces ubiquinone-1 to ubisemiquinone by a one-electron transfer pathway. This Marinomonas sp. (strain MWYL1) protein is Na(+)-translocating NADH-quinone reductase subunit F.